Here is a 932-residue protein sequence, read N- to C-terminus: Alanine--tRNA ligase (932 aa).

Zn(2+) contacts are provided by His623, His627, Cys726, and His730. Positions 893-916 (RVGGGGGGPPDFAQGGGPDVDSLD) are disordered. Gly residues predominate over residues 894–910 (VGGGGGGPPDFAQGGGP).

Belongs to the class-II aminoacyl-tRNA synthetase family. It depends on Zn(2+) as a cofactor.

Its subcellular location is the cytoplasm. The catalysed reaction is tRNA(Ala) + L-alanine + ATP = L-alanyl-tRNA(Ala) + AMP + diphosphate. In terms of biological role, catalyzes the attachment of alanine to tRNA(Ala) in a two-step reaction: alanine is first activated by ATP to form Ala-AMP and then transferred to the acceptor end of tRNA(Ala). Also edits incorrectly charged Ser-tRNA(Ala) and Gly-tRNA(Ala) via its editing domain. In Natronomonas pharaonis (strain ATCC 35678 / DSM 2160 / CIP 103997 / JCM 8858 / NBRC 14720 / NCIMB 2260 / Gabara) (Halobacterium pharaonis), this protein is Alanine--tRNA ligase.